The sequence spans 143 residues: Fido domain-containing protein DDB_G0283145 (143 aa).

Residues 1–128 (MKGIIVSDGV…TSHLALIILN (128 aa)) form the Fido domain. The helical transmembrane segment at 49–69 (SSPYAVAAWLLHAFVSIHPFI) threads the bilayer.

The protein localises to the membrane. This chain is Fido domain-containing protein DDB_G0283145, found in Dictyostelium discoideum (Social amoeba).